A 467-amino-acid chain; its full sequence is Probable receptor-like protein kinase At3g17420 (467 aa).

The signal sequence occupies residues 1–35 (MTSQLKRTLTKRYGVLELWEIIVIALFAAFIVILV). The Extracellular segment spans residues 36-123 (LSVWLSFRKK…LPPSTPSTTA (88 aa)). N-linked (GlcNAc...) asparagine glycosylation occurs at Asn-50. At Ser-70 the chain carries Phosphoserine. The N-linked (GlcNAc...) asparagine glycan is linked to Asn-79. The tract at residues 102 to 126 (GSLEKKPLVGSHLPPSTPSTTAPSP) is disordered. Residues 124–144 (PSPLLGLPEVSHIGWGHWFTL) form a helical membrane-spanning segment. Residues 145-467 (RDLQLATNHF…DNDITTDAKI (323 aa)) lie on the Cytoplasmic side of the membrane. Residues 154–433 (FSKESIIGDG…MLESDEYPVM (280 aa)) enclose the Protein kinase domain. Residues 160-168 (IGDGGYGVV) and Lys-182 contribute to the ATP site. Tyr-227 carries the post-translational modification Phosphotyrosine. The Proton acceptor role is filled by Asp-280. A phosphoserine mark is found at Ser-284 and Ser-313. Phosphothreonine is present on residues Thr-314 and Thr-319. Tyr-327 is subject to Phosphotyrosine. A disordered region spans residues 413–467 (DKRPKMSQVARMLESDEYPVMPREERRRRRNQNAETHRESTDTNKDNDITTDAKI). Residues 447-467 (ETHRESTDTNKDNDITTDAKI) show a composition bias toward basic and acidic residues.

This sequence belongs to the protein kinase superfamily. Ser/Thr protein kinase family.

Its subcellular location is the cell membrane. It carries out the reaction L-seryl-[protein] + ATP = O-phospho-L-seryl-[protein] + ADP + H(+). It catalyses the reaction L-threonyl-[protein] + ATP = O-phospho-L-threonyl-[protein] + ADP + H(+). The polypeptide is Probable receptor-like protein kinase At3g17420 (Arabidopsis thaliana (Mouse-ear cress)).